The primary structure comprises 113 residues: UPF0060 membrane protein CV_3485 (113 aa).

4 helical membrane-spanning segments follow: residues 12–32, 37–57, 67–87, and 91–111; these read GLFV…WLVL, SLWL…LLTL, AAYG…VDGV, and RWDA…MLAP.

This sequence belongs to the UPF0060 family.

The protein localises to the cell inner membrane. The protein is UPF0060 membrane protein CV_3485 of Chromobacterium violaceum (strain ATCC 12472 / DSM 30191 / JCM 1249 / CCUG 213 / NBRC 12614 / NCIMB 9131 / NCTC 9757 / MK).